A 113-amino-acid chain; its full sequence is Nucleoid-associated protein Cthe_2143 (113 aa).

It belongs to the YbaB/EbfC family. In terms of assembly, homodimer.

It is found in the cytoplasm. It localises to the nucleoid. Functionally, binds to DNA and alters its conformation. May be involved in regulation of gene expression, nucleoid organization and DNA protection. The sequence is that of Nucleoid-associated protein Cthe_2143 from Acetivibrio thermocellus (strain ATCC 27405 / DSM 1237 / JCM 9322 / NBRC 103400 / NCIMB 10682 / NRRL B-4536 / VPI 7372) (Clostridium thermocellum).